Reading from the N-terminus, the 304-residue chain is Olfactory receptor 52A4 (304 aa).

The Extracellular segment spans residues M1–G32. N7 carries an N-linked (GlcNAc...) asparagine glycan. Residues I33–I53 form a helical membrane-spanning segment. Residues K54–E61 are Cytoplasmic-facing. A helical transmembrane segment spans residues P62–V82. At P83 to F103 the chain is on the extracellular side. Cysteines 101 and 184 form a disulfide. A helical transmembrane segment spans residues Q104 to L124. The Cytoplasmic segment spans residues D125–T146. The chain crosses the membrane as a helical span at residues Y147 to I167. At K168 to Y203 the chain is on the extracellular side. Residues G204–I224 form a helical membrane-spanning segment. The Cytoplasmic portion of the chain corresponds to Q225 to Q255. A helical membrane pass occupies residues F256–I276. The Extracellular segment spans residues C277–Y279. A helical membrane pass occupies residues H280–K300. At D301–H304 the chain is on the cytoplasmic side.

Belongs to the G-protein coupled receptor 1 family.

It localises to the cell membrane. Odorant receptor. In Homo sapiens (Human), this protein is Olfactory receptor 52A4.